A 437-amino-acid polypeptide reads, in one-letter code: Enolase-related protein 1 (437 aa).

Substrate contacts are provided by histidine 160 and glutamate 169. Residue glutamate 212 is the Proton donor of the active site. Mg(2+) is bound by residues aspartate 247, glutamate 296, and aspartate 321. The substrate site is built by glutamate 296 and aspartate 321. Catalysis depends on lysine 346, which acts as the Proton acceptor. Substrate is bound by residues 373–376 (SHRS) and lysine 397.

The protein belongs to the enolase family. It depends on Mg(2+) as a cofactor.

It catalyses the reaction (2R)-2-phosphoglycerate = phosphoenolpyruvate + H2O. It functions in the pathway carbohydrate degradation; glycolysis; pyruvate from D-glyceraldehyde 3-phosphate: step 4/5. The chain is Enolase-related protein 1 (ERR1) from Saccharomyces cerevisiae (strain ATCC 204508 / S288c) (Baker's yeast).